The primary structure comprises 110 residues: Nucleoid-associated protein YpAngola_A2890 (110 aa).

The interval 90-110 is disordered; it reads KEKMASVSNGMQLPPGFKMPF.

This sequence belongs to the YbaB/EbfC family. In terms of assembly, homodimer.

Its subcellular location is the cytoplasm. It localises to the nucleoid. Binds to DNA and alters its conformation. May be involved in regulation of gene expression, nucleoid organization and DNA protection. The protein is Nucleoid-associated protein YpAngola_A2890 of Yersinia pestis bv. Antiqua (strain Angola).